A 416-amino-acid polypeptide reads, in one-letter code: Histidinol dehydrogenase (416 aa).

Tyrosine 117, glutamine 178, and asparagine 201 together coordinate NAD(+). Residues threonine 224, glutamine 246, and histidine 249 each coordinate substrate. Residues glutamine 246 and histidine 249 each coordinate Zn(2+). Active-site proton acceptor residues include glutamate 314 and histidine 315. Residues histidine 315, aspartate 348, glutamate 402, and histidine 407 each contribute to the substrate site. Position 348 (aspartate 348) interacts with Zn(2+). A Zn(2+)-binding site is contributed by histidine 407.

This sequence belongs to the histidinol dehydrogenase family. Zn(2+) serves as cofactor.

The enzyme catalyses L-histidinol + 2 NAD(+) + H2O = L-histidine + 2 NADH + 3 H(+). It functions in the pathway amino-acid biosynthesis; L-histidine biosynthesis; L-histidine from 5-phospho-alpha-D-ribose 1-diphosphate: step 9/9. In terms of biological role, catalyzes the sequential NAD-dependent oxidations of L-histidinol to L-histidinaldehyde and then to L-histidine. The polypeptide is Histidinol dehydrogenase (Staphylococcus aureus (strain bovine RF122 / ET3-1)).